The sequence spans 181 residues: Probable pyruvoyl-dependent arginine decarboxylase (181 aa).

S43 bears the Pyruvic acid (Ser) mark.

It belongs to the PdaD family. The cofactor is pyruvate.

The catalysed reaction is L-arginine + H(+) = agmatine + CO2. The sequence is that of Probable pyruvoyl-dependent arginine decarboxylase from Chlorobaculum tepidum (strain ATCC 49652 / DSM 12025 / NBRC 103806 / TLS) (Chlorobium tepidum).